Reading from the N-terminus, the 226-residue chain is Cytidylate kinase (226 aa).

10-18 contacts ATP; sequence GPASSGKST.

It belongs to the cytidylate kinase family. Type 1 subfamily.

It is found in the cytoplasm. The catalysed reaction is CMP + ATP = CDP + ADP. It carries out the reaction dCMP + ATP = dCDP + ADP. The protein is Cytidylate kinase of Enterococcus faecalis (strain ATCC 700802 / V583).